Consider the following 118-residue polypeptide: Small ribosomal subunit protein uS13 (118 aa).

A disordered region spans residues 94 to 118 (SLPVRGQRSKTNARTRKGPRKAIKK).

This sequence belongs to the universal ribosomal protein uS13 family. Part of the 30S ribosomal subunit. Forms a loose heterodimer with protein S19. Forms two bridges to the 50S subunit in the 70S ribosome.

In terms of biological role, located at the top of the head of the 30S subunit, it contacts several helices of the 16S rRNA. In the 70S ribosome it contacts the 23S rRNA (bridge B1a) and protein L5 of the 50S subunit (bridge B1b), connecting the 2 subunits; these bridges are implicated in subunit movement. Contacts the tRNAs in the A and P-sites. The sequence is that of Small ribosomal subunit protein uS13 from Psychromonas ingrahamii (strain DSM 17664 / CCUG 51855 / 37).